We begin with the raw amino-acid sequence, 304 residues long: Tetrahydromethanopterin S-methyltransferase subunit E (304 aa).

Transmembrane regions (helical) follow at residues 3–23, 86–106, 131–151, 152–172, 233–253, and 263–283; these read PLIG…AGAS, PLFA…TFAV, HTPV…VVSY, LMTV…IWGI, PVTG…TTVF, and WISV…NWKI.

This sequence belongs to the MtrE family. In terms of assembly, the complex is composed of 8 subunits; MtrA, MtrB, MtrC, MtrD, MtrE, MtrF, MtrG and MtrH.

It is found in the cell membrane. It catalyses the reaction 5-methyl-5,6,7,8-tetrahydromethanopterin + coenzyme M + 2 Na(+)(in) = 5,6,7,8-tetrahydromethanopterin + methyl-coenzyme M + 2 Na(+)(out). It participates in one-carbon metabolism; methanogenesis from CO(2); methyl-coenzyme M from 5,10-methylene-5,6,7,8-tetrahydromethanopterin: step 2/2. Part of a complex that catalyzes the formation of methyl-coenzyme M and tetrahydromethanopterin from coenzyme M and methyl-tetrahydromethanopterin. This is an energy-conserving, sodium-ion translocating step. In Methanosarcina acetivorans (strain ATCC 35395 / DSM 2834 / JCM 12185 / C2A), this protein is Tetrahydromethanopterin S-methyltransferase subunit E.